A 123-amino-acid polypeptide reads, in one-letter code: Large ribosomal subunit protein bL12 (123 aa).

It belongs to the bacterial ribosomal protein bL12 family. Homodimer. Part of the ribosomal stalk of the 50S ribosomal subunit. Forms a multimeric L10(L12)X complex, where L10 forms an elongated spine to which 2 to 4 L12 dimers bind in a sequential fashion. Binds GTP-bound translation factors.

Functionally, forms part of the ribosomal stalk which helps the ribosome interact with GTP-bound translation factors. Is thus essential for accurate translation. This is Large ribosomal subunit protein bL12 from Aliarcobacter butzleri (strain RM4018) (Arcobacter butzleri).